The primary structure comprises 188 residues: Molybdopterin synthase catalytic subunit (188 aa).

Residues 1-14 (MATQPPQDQTSTTP) are compositionally biased toward low complexity. The segment at 1 to 23 (MATQPPQDQTSTTPSLPPHLDPT) is disordered. Substrate is bound by residues 134-135 (HR), Lys-150, and 157-159 (KRE).

The protein belongs to the MoaE family. MOCS2B subfamily. As to quaternary structure, heterotetramer; composed of 2 small (MOCS2A) and 2 large (MOCS2B) subunits.

The protein resides in the cytoplasm. It carries out the reaction 2 [molybdopterin-synthase sulfur-carrier protein]-C-terminal-Gly-aminoethanethioate + cyclic pyranopterin phosphate + H2O = molybdopterin + 2 [molybdopterin-synthase sulfur-carrier protein]-C-terminal Gly-Gly + 2 H(+). It functions in the pathway cofactor biosynthesis; molybdopterin biosynthesis. Catalytic subunit of the molybdopterin synthase complex, a complex that catalyzes the conversion of precursor Z into molybdopterin. Acts by mediating the incorporation of 2 sulfur atoms from thiocarboxylated MOCS2A into precursor Z to generate a dithiolene group. In Aspergillus fumigatus (strain ATCC MYA-4609 / CBS 101355 / FGSC A1100 / Af293) (Neosartorya fumigata), this protein is Molybdopterin synthase catalytic subunit.